Consider the following 184-residue polypeptide: Lactoylglutathione lyase (184 aa).

Ala-2 carries the post-translational modification N-acetylalanine. Cys-19 and Cys-20 are disulfide-bonded. The VOC domain maps to 31–177 (LLQQTMLRIK…DGYWIEILNP (147 aa)). Substrate-binding residues include Gln-34 and Arg-38. A Zn(2+)-binding site is contributed by Gln-34. Glu-100 is a binding site for Zn(2+). Substrate is bound at residue Asn-104. Thr-107 bears the Phosphothreonine mark. Substrate contacts are provided by Arg-123 and His-127. His-127 provides a ligand contact to Zn(2+). The residue at position 139 (Cys-139) is an S-glutathionyl cysteine. Lys-148 is subject to N6-acetyllysine; alternate. Lys-148 is modified (N6-succinyllysine; alternate). 157-158 (KM) provides a ligand contact to substrate. Position 173 (Glu-173) interacts with Zn(2+). Catalysis depends on Glu-173, which acts as the Proton donor/acceptor.

This sequence belongs to the glyoxalase I family. Homodimer. Zn(2+) serves as cofactor. In terms of processing, glutathionylation at Cys-139 inhibits enzyme activity. Post-translationally, phosphorylated at Thr-107 in the presence of CaMK2. However, this is a consensus site for phosphorylation by CK2 so phosphorylation may be mediated by CK2 rather than CaMK2. Phosphorylation is induced by TNF and suppresses the TNF-induced transcriptional activity of NF-kappa-B. Exists in a nitric oxide (NO)-modified form. The exact nature of the modification is unknown, but it suppresses the TNF-induced transcriptional activity of NF-kappa-B.

The catalysed reaction is (R)-S-lactoylglutathione = methylglyoxal + glutathione. It participates in secondary metabolite metabolism; methylglyoxal degradation; (R)-lactate from methylglyoxal: step 1/2. In terms of biological role, catalyzes the conversion of hemimercaptal, formed from methylglyoxal and glutathione, to S-lactoylglutathione. Involved in the regulation of TNF-induced transcriptional activity of NF-kappa-B. Required for normal osteoclastogenesis. This chain is Lactoylglutathione lyase (Glo1), found in Rattus norvegicus (Rat).